A 303-amino-acid polypeptide reads, in one-letter code: D-alanine--D-alanine ligase (303 aa).

One can recognise an ATP-grasp domain in the interval 104–300; sequence KLLWNAVGLP…FERLVERVLE (197 aa). An ATP-binding site is contributed by 132–187; the sequence is IAKLGLPLFVKPASEGSSVGVSKVKTAEQLLPAIEEALKYDSIVLVEENLAGAEYS. The Mg(2+) site is built by aspartate 254, glutamate 267, and asparagine 269.

The protein belongs to the D-alanine--D-alanine ligase family. The cofactor is Mg(2+). Mn(2+) is required as a cofactor.

It localises to the cytoplasm. It catalyses the reaction 2 D-alanine + ATP = D-alanyl-D-alanine + ADP + phosphate + H(+). The protein operates within cell wall biogenesis; peptidoglycan biosynthesis. Its function is as follows. Cell wall formation. The sequence is that of D-alanine--D-alanine ligase from Glaesserella parasuis serovar 5 (strain SH0165) (Haemophilus parasuis).